Reading from the N-terminus, the 132-residue chain is NADH-quinone oxidoreductase subunit A (132 aa).

3 helical membrane passes run 14 to 34, 66 to 86, and 96 to 116; these read FFTFFFIAVSICVFMLSISWI, FYLVAIYFVLFDVEALYLYAW, and IGFIEALIFILFLLSGLIYLI.

It belongs to the complex I subunit 3 family. NDH-1 is composed of 13 different subunits. Subunits NuoA, H, J, K, L, M, N constitute the membrane sector of the complex.

The protein localises to the cell membrane. It carries out the reaction a quinone + NADH + 5 H(+)(in) = a quinol + NAD(+) + 4 H(+)(out). In terms of biological role, NDH-1 shuttles electrons from NADH, via FMN and iron-sulfur (Fe-S) centers, to quinones in the respiratory chain. The immediate electron acceptor for the enzyme in this species is believed to be ubiquinone. Couples the redox reaction to proton translocation (for every two electrons transferred, four hydrogen ions are translocated across the cytoplasmic membrane), and thus conserves the redox energy in a proton gradient. The chain is NADH-quinone oxidoreductase subunit A from Buchnera aphidicola subsp. Baizongia pistaciae (strain Bp).